The sequence spans 702 residues: Dynein axonemal intermediate chain 1 (702 aa).

The disordered stretch occupies residues 1–58; the sequence is MLPASSKMPHKQPPPPRKQSISMGRGARKRDEDSGTEVGEGTDEWVQSKATVKPPDQL. Residues Ser134 and Ser137 each carry the phosphoserine modification. WD repeat units follow at residues 383–423, 432–475, 540–580, 582–622, and 630–669; these read SSES…SQPS, KHTD…LVHT, AHNM…PMFI, DLNS…YEAI, and KKKNKLTHVQFNPIHPIIIVGDDRGHVTCLKLSPNLRKMP.

Belongs to the dynein intermediate chain family. As to quaternary structure, consists of at least two heavy chains and a number of intermediate and light chains. Interacts with BICD2. Interacts with CFAP45 and CFAP52. Interacts with CFAP53.

It is found in the cytoplasm. The protein localises to the cytoskeleton. The protein resides in the cilium axoneme. In terms of biological role, part of the dynein complex of respiratory cilia. This chain is Dynein axonemal intermediate chain 1 (DNAI1), found in Bos taurus (Bovine).